A 1921-amino-acid polypeptide reads, in one-letter code: Histone transcription regulator 3 homolog (1921 aa).

Disordered stretches follow at residues 350–439, 1402–1466, 1738–1769, and 1799–1921; these read IGEV…LEKQ, GEDA…ATPV, PGSA…KTRV, and KGPP…SAPE. Basic and acidic residues-rich tracts occupy residues 353–376 and 391–400; these read VENK…KKEA and TTVKTEDRDS. The segment covering 413–422 has biased composition (polar residues); it reads GTTSSSQPPS. The segment covering 428-439 has biased composition (basic and acidic residues); sequence RGADEPAELEKQ. Acidic residues predominate over residues 1402–1425; it reads GEDADMESGDDSDSDSEVGSDSET. Over residues 1757-1769 the composition is skewed to basic and acidic residues; sequence GKKEDGKKEKTRV. The span at 1806–1818 shows a compositional bias: low complexity; that stretch reads SSNGSSSNSGTRS. Composition is skewed to basic and acidic residues over residues 1819–1836 and 1861–1890; these read NSEE…KSTQ and EADK…EKSA. Residues 1899 to 1910 show a composition bias toward polar residues; it reads TPKSKSTGSNGV.

It belongs to the HIR3 family.

It localises to the nucleus. Has a role in a nucleosome assembly pathway that is required for the integrity of heterochromatin and proper chromosome segregation. The protein is Histone transcription regulator 3 homolog (HIR3) of Yarrowia lipolytica (strain CLIB 122 / E 150) (Yeast).